The chain runs to 476 residues: Siroheme synthase 1 (476 aa).

The interval 1 to 203 (MDYLPIFADL…GQTAEAQRQL (203 aa)) is precorrin-2 dehydrogenase /sirohydrochlorin ferrochelatase. NAD(+) contacts are provided by residues 22-23 (EV) and 43-44 (QS). Serine 128 bears the Phosphoserine mark. Residues 219–476 (GEIALVGAGP…VSRPAVVNLA (258 aa)) form a uroporphyrinogen-III C-methyltransferase region. Proline 228 provides a ligand contact to S-adenosyl-L-methionine. The Proton acceptor role is filled by aspartate 251. Residue lysine 273 is the Proton donor of the active site. S-adenosyl-L-methionine-binding positions include 304–306 (GGD), isoleucine 309, 334–335 (TA), methionine 386, and glycine 415.

This sequence in the N-terminal section; belongs to the precorrin-2 dehydrogenase / sirohydrochlorin ferrochelatase family. In the C-terminal section; belongs to the precorrin methyltransferase family.

The catalysed reaction is uroporphyrinogen III + 2 S-adenosyl-L-methionine = precorrin-2 + 2 S-adenosyl-L-homocysteine + H(+). It catalyses the reaction precorrin-2 + NAD(+) = sirohydrochlorin + NADH + 2 H(+). The enzyme catalyses siroheme + 2 H(+) = sirohydrochlorin + Fe(2+). Its pathway is cofactor biosynthesis; adenosylcobalamin biosynthesis; precorrin-2 from uroporphyrinogen III: step 1/1. It participates in cofactor biosynthesis; adenosylcobalamin biosynthesis; sirohydrochlorin from precorrin-2: step 1/1. It functions in the pathway porphyrin-containing compound metabolism; siroheme biosynthesis; precorrin-2 from uroporphyrinogen III: step 1/1. The protein operates within porphyrin-containing compound metabolism; siroheme biosynthesis; siroheme from sirohydrochlorin: step 1/1. Its pathway is porphyrin-containing compound metabolism; siroheme biosynthesis; sirohydrochlorin from precorrin-2: step 1/1. Its function is as follows. Multifunctional enzyme that catalyzes the SAM-dependent methylations of uroporphyrinogen III at position C-2 and C-7 to form precorrin-2 via precorrin-1. Then it catalyzes the NAD-dependent ring dehydrogenation of precorrin-2 to yield sirohydrochlorin. Finally, it catalyzes the ferrochelation of sirohydrochlorin to yield siroheme. This is Siroheme synthase 1 from Serratia proteamaculans (strain 568).